A 43-amino-acid chain; its full sequence is Cytochrome b559 subunit beta (43 aa).

The helical transmembrane segment at 18–34 (WLSVHALGIPTIFFLGA) threads the bilayer. His-22 provides a ligand contact to heme.

It belongs to the PsbE/PsbF family. Heterodimer of an alpha subunit and a beta subunit. PSII is composed of 1 copy each of membrane proteins PsbA, PsbB, PsbC, PsbD, PsbE, PsbF, PsbH, PsbI, PsbJ, PsbK, PsbL, PsbM, PsbT, PsbX, PsbY, PsbZ, Psb30/Ycf12, at least 3 peripheral proteins of the oxygen-evolving complex and a large number of cofactors. It forms dimeric complexes. The cofactor is heme b.

The protein resides in the plastid. The protein localises to the chloroplast thylakoid membrane. Functionally, this b-type cytochrome is tightly associated with the reaction center of photosystem II (PSII). PSII is a light-driven water:plastoquinone oxidoreductase that uses light energy to abstract electrons from H(2)O, generating O(2) and a proton gradient subsequently used for ATP formation. It consists of a core antenna complex that captures photons, and an electron transfer chain that converts photonic excitation into a charge separation. This chain is Cytochrome b559 subunit beta, found in Stigeoclonium helveticum (Green alga).